The primary structure comprises 194 residues: ATP-dependent Clp protease proteolytic subunit 3 (194 aa).

Residue serine 96 is the Nucleophile of the active site. Residue histidine 121 is part of the active site.

The protein belongs to the peptidase S14 family. In terms of assembly, fourteen ClpP subunits assemble into 2 heptameric rings which stack back to back to give a disk-like structure with a central cavity, resembling the structure of eukaryotic proteasomes.

It is found in the cytoplasm. The enzyme catalyses Hydrolysis of proteins to small peptides in the presence of ATP and magnesium. alpha-casein is the usual test substrate. In the absence of ATP, only oligopeptides shorter than five residues are hydrolyzed (such as succinyl-Leu-Tyr-|-NHMec, and Leu-Tyr-Leu-|-Tyr-Trp, in which cleavage of the -Tyr-|-Leu- and -Tyr-|-Trp bonds also occurs).. In terms of biological role, cleaves peptides in various proteins in a process that requires ATP hydrolysis. Has a chymotrypsin-like activity. Plays a major role in the degradation of misfolded proteins. In Rhizobium johnstonii (strain DSM 114642 / LMG 32736 / 3841) (Rhizobium leguminosarum bv. viciae), this protein is ATP-dependent Clp protease proteolytic subunit 3.